Reading from the N-terminus, the 90-residue chain is Small ribosomal subunit protein uS15 (90 aa).

The protein belongs to the universal ribosomal protein uS15 family. In terms of assembly, part of the 30S ribosomal subunit. Forms a bridge to the 50S subunit in the 70S ribosome, contacting the 23S rRNA.

Functionally, one of the primary rRNA binding proteins, it binds directly to 16S rRNA where it helps nucleate assembly of the platform of the 30S subunit by binding and bridging several RNA helices of the 16S rRNA. Forms an intersubunit bridge (bridge B4) with the 23S rRNA of the 50S subunit in the ribosome. The sequence is that of Small ribosomal subunit protein uS15 from Wolbachia sp. subsp. Drosophila simulans (strain wRi).